We begin with the raw amino-acid sequence, 345 residues long: Glycosyltransferase 1 domain-containing protein 1 (345 aa).

The signal sequence occupies residues 1–19 (MKILFLACLRAHTGNSTTA). 2 N-linked (GlcNAc...) asparagine glycosylation sites follow: Asn-246 and Asn-322.

This sequence belongs to the glycosyltransferase group 1 family. Glycosyltransferase 4 subfamily.

It localises to the secreted. This Xenopus tropicalis (Western clawed frog) protein is Glycosyltransferase 1 domain-containing protein 1 (glt1d1).